Consider the following 301-residue polypeptide: Protein ARMCX6 (301 aa).

The interval 1–6 (MGRARE) is mitochondrion outer membrane (MOM)-targeting sequence. At 1–7 (MGRAREM) the chain is on the mitochondrial intermembrane side. The helical; Signal-anchor transmembrane segment at 8 to 25 (GWMAAGLMIGAGACYCMY) threads the bilayer. Residues 26–36 (KLTMGRDEGNE) form a mitochondrion outer membrane (MOM)-targeting sequence region. The Cytoplasmic segment spans residues 26–301 (KLTMGRDEGN…REMLVEAISP (276 aa)). The segment at 70-105 (SEDGEWDEPGAPGGTEDRRSGGGKANRAHPTKQRPF) is disordered.

Belongs to the eutherian X-chromosome-specific Armcx family.

It localises to the mitochondrion. The protein resides in the mitochondrion outer membrane. In terms of biological role, may regulate the dynamics and distribution of mitochondria in neural cells. This Rattus norvegicus (Rat) protein is Protein ARMCX6 (Armcx6).